A 354-amino-acid chain; its full sequence is NADH-quinone oxidoreductase subunit H (354 aa).

8 helical membrane passes run 22–42 (ILIR…YLIL), 91–111 (YLIA…VIPF), 124–144 (LLYV…AGWA), 168–188 (MGFA…SAIV), 203–223 (ILSW…ISGV), 255–275 (LFFL…ALMF), 291–311 (IPGF…FIWI), and 326–346 (LGWK…AIWI).

Belongs to the complex I subunit 1 family. As to quaternary structure, NDH-1 is composed of 14 different subunits. Subunits NuoA, H, J, K, L, M, N constitute the membrane sector of the complex.

It localises to the cell inner membrane. It catalyses the reaction a quinone + NADH + 5 H(+)(in) = a quinol + NAD(+) + 4 H(+)(out). Functionally, NDH-1 shuttles electrons from NADH, via FMN and iron-sulfur (Fe-S) centers, to quinones in the respiratory chain. The immediate electron acceptor for the enzyme in this species is believed to be ubiquinone. Couples the redox reaction to proton translocation (for every two electrons transferred, four hydrogen ions are translocated across the cytoplasmic membrane), and thus conserves the redox energy in a proton gradient. This subunit may bind ubiquinone. The sequence is that of NADH-quinone oxidoreductase subunit H from Cupriavidus taiwanensis (strain DSM 17343 / BCRC 17206 / CCUG 44338 / CIP 107171 / LMG 19424 / R1) (Ralstonia taiwanensis (strain LMG 19424)).